Here is a 530-residue protein sequence, read N- to C-terminus: Phosphoenolpyruvate carboxykinase (ATP) (530 aa).

Residues R60, Y195, and K201 each contribute to the substrate site. ATP is bound by residues K201, H221, and 237–245 (GLSGTGKTT). Mn(2+)-binding residues include K201 and H221. D258 contributes to the Mn(2+) binding site. ATP is bound by residues E286, R324, 443–444 (RI), and S449. R324 contributes to the substrate binding site.

The protein belongs to the phosphoenolpyruvate carboxykinase (ATP) family. Mn(2+) serves as cofactor.

The protein localises to the cytoplasm. It carries out the reaction oxaloacetate + ATP = phosphoenolpyruvate + ADP + CO2. It participates in carbohydrate biosynthesis; gluconeogenesis. Involved in the gluconeogenesis. Catalyzes the conversion of oxaloacetate (OAA) to phosphoenolpyruvate (PEP) through direct phosphoryl transfer between the nucleoside triphosphate and OAA. The polypeptide is Phosphoenolpyruvate carboxykinase (ATP) (Pelobacter propionicus (strain DSM 2379 / NBRC 103807 / OttBd1)).